The sequence spans 429 residues: MANVTVIGAQWGDEGKGKIVDWLASRADAVVRFQGGHNAGHTLVVGEQVYKLSLLPSGIVTGTLSIIGNGVVLDPWALKAEIEKLTGQGVEINAENFAIADNCPLILPLHRDLDGLREQAAGAGKIGTTGRGIGPAYEDKVGRRAIRVCDLAHLDALDAQLDRLCAHHDALRAGFGQPPVDRAALIEELREIAPYVLQFAQPVWKRLNTVRKAGARILFEGAQGVLLDVDHGTYPFVTSSNTVSGTAASGSGLGPAQTGFVLGIVKAYTTRVGSGPFPTELEDETGQRLGERGHEFGTVTGRKRRCGWFDAVLVRQSCAISGVTGIALTKLDVLDGFEKVKICTGYRLRGKVLDYFPSHAADQAEVEPIYEEMDGWSGTTAGARSWADLPAQAIKYIQRVQELIETPVALVSTSPEREDTILVRDPFVD.

GTP-binding positions include 12–18 (GDEGKGK) and 40–42 (GHT). The active-site Proton acceptor is Asp13. Mg(2+) is bound by residues Asp13 and Gly40. Residues 13–16 (DEGK), 38–41 (NAGH), Thr129, Arg143, Gln223, Thr238, and Arg302 contribute to the IMP site. His41 acts as the Proton donor in catalysis. Substrate is bound at residue 298-304 (TVTGRKR). Residues Arg304, 330-332 (KLD), and 412-414 (STS) contribute to the GTP site.

It belongs to the adenylosuccinate synthetase family. As to quaternary structure, homodimer. Mg(2+) is required as a cofactor.

The protein localises to the cytoplasm. It catalyses the reaction IMP + L-aspartate + GTP = N(6)-(1,2-dicarboxyethyl)-AMP + GDP + phosphate + 2 H(+). It participates in purine metabolism; AMP biosynthesis via de novo pathway; AMP from IMP: step 1/2. Functionally, plays an important role in the de novo pathway of purine nucleotide biosynthesis. Catalyzes the first committed step in the biosynthesis of AMP from IMP. This chain is Adenylosuccinate synthetase, found in Novosphingobium aromaticivorans (strain ATCC 700278 / DSM 12444 / CCUG 56034 / CIP 105152 / NBRC 16084 / F199).